The sequence spans 263 residues: Aquaporin Lacbi1:247946 (263 aa).

Residues 1–18 (MKLTISHHKCAIRKVMAE) are Cytoplasmic-facing. A helical transmembrane segment spans residues 19-39 (FVGVALLVIFGAGTACQVVLS). The Extracellular segment spans residues 40–45 (TNPSSF). Residues 46–66 (LSINFGWAIGIATGAWVSAGI) traverse the membrane as a helical segment. The Cytoplasmic segment spans residues 67–89 (SGGHINPAITIAMATYRGFPWRE). Residues 72–74 (NPA) carry the NPA 1 motif. Residues 90–110 (VPGYIFAQALGGFVGAALVYA) form a helical membrane-spanning segment. The Extracellular segment spans residues 111–143 (NYFHAIDIFEGGHIRTQATASLFATFALPYMTQ). The helical transmembrane segment at 144 to 164 (ASCFFSEFLATAVLFIVFLAL) threads the bilayer. The Cytoplasmic segment spans residues 165–169 (NDKHN). The chain crosses the membrane as a helical span at residues 170-190 (GALTNGLLPFALFILFIGLGA). The Extracellular segment spans residues 191–227 (SLGMQTGYAVNPARDFGPRLFLAMAGYGKAVFNYRRQ). Positions 201–203 (NPA) match the NPA 2 motif. The chain crosses the membrane as a helical span at residues 228-248 (YWIWAPIIAPILGAQAGGLLY). The Cytoplasmic portion of the chain corresponds to 249 to 263 (DTSIYNGDDSPIKWR).

This sequence belongs to the MIP/aquaporin (TC 1.A.8) family.

It is found in the membrane. It catalyses the reaction H2O(in) = H2O(out). Functionally, water channel required to facilitate the transport of water across membranes. Shows low but significant water conductivity, but no glycerol nor ammonium transport activities. The sequence is that of Aquaporin Lacbi1:247946 from Laccaria bicolor (strain S238N-H82 / ATCC MYA-4686) (Bicoloured deceiver).